We begin with the raw amino-acid sequence, 406 residues long: tRNA-specific 2-thiouridylase MnmA (406 aa).

ATP is bound by residues 6–13 and Leu32; that span reads AMSGGVDS. Residue Cys101 is the Nucleophile of the active site. The cysteines at positions 101 and 193 are disulfide-linked. ATP is bound at residue Gly125. The interval 143–145 is interaction with tRNA; that stretch reads KDQ. The active-site Cysteine persulfide intermediate is Cys193. The tract at residues 378-406 is disordered; the sequence is GAPIEEQPAPGTVGAVDADAIEQGEDAQR. Residues 396-406 are compositionally biased toward acidic residues; it reads DAIEQGEDAQR.

Belongs to the MnmA/TRMU family.

Its subcellular location is the cytoplasm. The enzyme catalyses S-sulfanyl-L-cysteinyl-[protein] + uridine(34) in tRNA + AH2 + ATP = 2-thiouridine(34) in tRNA + L-cysteinyl-[protein] + A + AMP + diphosphate + H(+). In terms of biological role, catalyzes the 2-thiolation of uridine at the wobble position (U34) of tRNA, leading to the formation of s(2)U34. The protein is tRNA-specific 2-thiouridylase MnmA of Corynebacterium urealyticum (strain ATCC 43042 / DSM 7109).